A 110-amino-acid chain; its full sequence is MINKLEIVNELRRCAEPTQEGWDIWYHGAYLGTIVKIKTGKYMIIRESKDAPVGIRNNFMAAISSFTDAAYEIYLADYKEFQESQPVIRSIGVNKAQQKTLWQRIKGWFK.

This is an uncharacterized protein from Enterobacteria phage T4 (Bacteriophage T4).